The sequence spans 1437 residues: Protein CC2D2B (1437 aa).

The polypeptide is Protein CC2D2B (Homo sapiens (Human)).